The primary structure comprises 366 residues: uncharacterized protein (366 aa).

6 helical membrane-spanning segments follow: residues 164-184 (IPLI…FADI), 188-208 (IVVG…RKLL), 223-243 (VFPI…IYSL), 256-276 (FIGE…LILM), 299-319 (FFCL…GEYL), and 325-345 (FIMF…LSVI).

It to A.fulgidus AF2058.

The protein localises to the cell membrane. This is an uncharacterized protein from Methanocaldococcus jannaschii (strain ATCC 43067 / DSM 2661 / JAL-1 / JCM 10045 / NBRC 100440) (Methanococcus jannaschii).